Here is a 202-residue protein sequence, read N- to C-terminus: Large ribosomal subunit protein uL13 (202 aa).

The protein belongs to the universal ribosomal protein uL13 family.

This chain is Large ribosomal subunit protein uL13, found in Caenorhabditis elegans.